The chain runs to 114 residues: UPF0060 membrane protein GDI3492/Gdia_2889 (114 aa).

Transmembrane regions (helical) follow at residues 8-28 (FAVY…WWCW), 35-55 (AWVL…LTLV), 64-84 (FAAY…LVEG), and 92-112 (AAGV…GRGA).

It belongs to the UPF0060 family.

Its subcellular location is the cell inner membrane. This chain is UPF0060 membrane protein GDI3492/Gdia_2889, found in Gluconacetobacter diazotrophicus (strain ATCC 49037 / DSM 5601 / CCUG 37298 / CIP 103539 / LMG 7603 / PAl5).